Consider the following 327-residue polypeptide: D-threonate 4-phosphate dehydrogenase (327 aa).

H139 and T140 together coordinate substrate. H169, H213, and H268 together coordinate a divalent metal cation. 3 residues coordinate substrate: K276, N285, and R294.

The protein belongs to the PdxA family. PdxA2 subfamily. In terms of assembly, homodimer. The cofactor is a divalent metal cation.

It catalyses the reaction 4-O-phospho-D-threonate + NAD(+) = dihydroxyacetone phosphate + CO2 + NADH. Its function is as follows. Catalyzes the NAD-dependent oxidation and subsequent decarboxylation of D-threonate 4-phosphate to produce dihydroxyacetone phosphate (DHAP). Can also use 4-hydroxy-L-threonine 4-phosphate as substrate. The polypeptide is D-threonate 4-phosphate dehydrogenase (Salmonella typhimurium (strain LT2 / SGSC1412 / ATCC 700720)).